The sequence spans 323 residues: tRNA U34 carboxymethyltransferase (323 aa).

Residues Lys91, Trp105, Lys110, Gly130, 152 to 154 (DPT), 181 to 182 (IE), Met196, Tyr200, and Arg315 each bind carboxy-S-adenosyl-L-methionine.

It belongs to the class I-like SAM-binding methyltransferase superfamily. CmoB family. As to quaternary structure, homotetramer.

The enzyme catalyses carboxy-S-adenosyl-L-methionine + 5-hydroxyuridine(34) in tRNA = 5-carboxymethoxyuridine(34) in tRNA + S-adenosyl-L-homocysteine + H(+). Functionally, catalyzes carboxymethyl transfer from carboxy-S-adenosyl-L-methionine (Cx-SAM) to 5-hydroxyuridine (ho5U) to form 5-carboxymethoxyuridine (cmo5U) at position 34 in tRNAs. This chain is tRNA U34 carboxymethyltransferase, found in Shigella boydii serotype 18 (strain CDC 3083-94 / BS512).